The chain runs to 418 residues: Putative ion-transport protein YfeO (418 aa).

The next 12 membrane-spanning stretches (helical) occupy residues 10 to 30, 54 to 74, 99 to 119, 120 to 140, 149 to 169, 186 to 206, 223 to 243, 258 to 278, 300 to 320, 322 to 342, 343 to 363, and 371 to 391; these read LLLS…LIVV, DSPF…GLVI, ALLG…SLGP, EHPI…RLLP, ILAS…AALI, LFAP…FFHP, ILSG…AVWC, VLVL…GGPV, DYFL…ASGF, GGRI…LHEH, VPAV…VLVV, and LFMA…CIVM.

This sequence belongs to the chloride channel (TC 2.A.49) family.

The protein localises to the cell membrane. In Escherichia coli O17:K52:H18 (strain UMN026 / ExPEC), this protein is Putative ion-transport protein YfeO.